We begin with the raw amino-acid sequence, 93 residues long: Small ribosomal subunit protein uS19 (93 aa).

It belongs to the universal ribosomal protein uS19 family.

In terms of biological role, protein S19 forms a complex with S13 that binds strongly to the 16S ribosomal RNA. The sequence is that of Small ribosomal subunit protein uS19 from Tropheryma whipplei (strain TW08/27) (Whipple's bacillus).